The following is a 250-amino-acid chain: Small ribosomal subunit protein uS2 (250 aa).

It belongs to the universal ribosomal protein uS2 family.

This is Small ribosomal subunit protein uS2 from Acidovorax sp. (strain JS42).